A 221-amino-acid chain; its full sequence is Ras-related protein Rab-27A (221 aa).

Position 2 is an N-acetylserine (Ser2). Ser2 is modified (phosphoserine). GTP is bound at residue 16 to 24 (GDSGVGKTS). Positions 38–46 (FITTVGIDF) match the Effector region motif. Residues 74-78 (DTAGQ), 133-136 (NKSD), and 163-165 (SAA) each bind GTP. A disulfide bridge connects residues Cys123 and Cys188. S-geranylgeranyl cysteine attachment occurs at residues Cys219 and Cys221. Cys221 bears the Cysteine methyl ester mark.

Belongs to the small GTPase superfamily. Rab family. As to quaternary structure, binds SYTL1, SLAC2B, MYRIP, SYTL3, SYTL4 and SYTL5. Interacts with RPH3A and RPH3A. Binds MLPH and SYTL2. Interacts with UNC13D. Does not interact with the BLOC-3 complex (heterodimer of HPS1 and HPS4). Interacts (GDP-bound form preferentially) with DENND10. In terms of tissue distribution, found in all the examined tissues except in brain. Low expression was found in thymus, kidney, muscle and placenta. Detected in melanocytes, and in most tumor cell lines examined. Expressed in cytotoxic T-lymphocytes (CTL) and mast cells.

The protein resides in the membrane. It is found in the melanosome. It localises to the late endosome. Its subcellular location is the lysosome. It carries out the reaction GTP + H2O = GDP + phosphate + H(+). Its activity is regulated as follows. Regulated by guanine nucleotide exchange factors (GEFs) which promote the exchange of bound GDP for free GTP, GTPase activating proteins (GAPs) which increase the GTP hydrolysis activity, and GDP dissociation inhibitors which inhibit the dissociation of the nucleotide from the GTPase. Activated by GEFs such as DENND10. Small GTPase which cycles between active GTP-bound and inactive GDP-bound states. In its active state, binds to a variety of effector proteins to regulate homeostasis of late endocytic pathway, including endosomal positioning, maturation and secretion. Plays a role in cytotoxic granule exocytosis in lymphocytes. Required for both granule maturation and granule docking and priming at the immunologic synapse. In Homo sapiens (Human), this protein is Ras-related protein Rab-27A (RAB27A).